Consider the following 216-residue polypeptide: MMIGLLGRKIGMTRVFTPEGVSVPVSVVEVQPNRVSQVKTAANDGYSAVQLTGGTKKSSKVSKPVAGHFAKAQIDAGDMQVEFRIDSEDAFTPGQVISVADVFTAGQYVDVSGLTKGKGFAGTVKRHNFRTQDASHGNSRSHRVPGSIGQNQTPGRVFKGKKMAGHMGNARCTIQSLELVKVDSERNLLLIKGAIPGAPGSRVEIKPAVKKQARGE.

The disordered stretch occupies residues 132 to 155 (QDASHGNSRSHRVPGSIGQNQTPG). At glutamine 152 the chain carries N5-methylglutamine.

Belongs to the universal ribosomal protein uL3 family. Part of the 50S ribosomal subunit. Forms a cluster with proteins L14 and L19. Methylated by PrmB.

In terms of biological role, one of the primary rRNA binding proteins, it binds directly near the 3'-end of the 23S rRNA, where it nucleates assembly of the 50S subunit. This chain is Large ribosomal subunit protein uL3, found in Legionella pneumophila (strain Paris).